Here is a 252-residue protein sequence, read N- to C-terminus: C4b-binding protein beta chain (252 aa).

An N-terminal signal peptide occupies residues 1 to 17 (MFFWCACCLMVAWRVSA). 3 consecutive Sushi domains span residues 21–78 (EHCP…ECRL), 79–136 (GHCP…ICKS), and 137–193 (RDCD…VCKL). Disulfide bonds link Cys23-Cys63, Cys49-Cys76, Cys81-Cys121, Cys107-Cys134, Cys139-Cys179, and Cys165-Cys191. N-linked (GlcNAc...) asparagine glycosylation is found at Asn64, Asn71, Asn98, Asn117, and Asn154.

Disulfide-linked complex of alpha and beta chains of 3 possible sorts: a 570 kDa complex of 7 alpha chains and 1 beta chain, a 530 kDa homoheptamer of alpha chains or a 500 kDa complex of 6 alpha chains and 1 beta chain. The central body of the alpha chain homomer supports tentacles, each with the binding site for C4b at the end.

It is found in the secreted. In terms of biological role, controls the classical pathway of complement activation. It binds as a cofactor to C3b/C4b inactivator (C3bINA), which then hydrolyzes the complement fragment C4b. It also accelerates the degradation of the C4bC2a complex (C3 convertase) by dissociating the complement fragment C2a. It also interacts with anticoagulant protein S and with serum amyloid P component. The beta chain binds protein S. In Homo sapiens (Human), this protein is C4b-binding protein beta chain (C4BPB).